A 490-amino-acid polypeptide reads, in one-letter code: Cytochrome P450 2C8 (490 aa).

Ser100, Asn204, and Arg241 together coordinate substrate. The residue at position 100 (Ser100) is a Phosphoserine. Cys435 contributes to the heme binding site.

This sequence belongs to the cytochrome P450 family. It depends on heme as a cofactor.

The protein resides in the endoplasmic reticulum membrane. It is found in the microsome membrane. The catalysed reaction is an organic molecule + reduced [NADPH--hemoprotein reductase] + O2 = an alcohol + oxidized [NADPH--hemoprotein reductase] + H2O + H(+). The enzyme catalyses (5Z,8Z,11Z,14Z)-eicosatetraenoate + reduced [NADPH--hemoprotein reductase] + O2 = (11R,12S)-epoxy-(5Z,8Z,14Z)-eicosatrienoate + oxidized [NADPH--hemoprotein reductase] + H2O + H(+). It catalyses the reaction (5Z,8Z,11Z,14Z)-eicosatetraenoate + reduced [NADPH--hemoprotein reductase] + O2 = (11S,12R)-epoxy-(5Z,8Z,14Z)-eicosatrienoate + oxidized [NADPH--hemoprotein reductase] + H2O + H(+). It carries out the reaction (5Z,8Z,11Z,14Z)-eicosatetraenoate + reduced [NADPH--hemoprotein reductase] + O2 = (14R,15S)-epoxy-(5Z,8Z,11Z)-eicosatrienoate + oxidized [NADPH--hemoprotein reductase] + H2O + H(+). The catalysed reaction is (5Z,8Z,11Z,14Z)-eicosatetraenoate + reduced [NADPH--hemoprotein reductase] + O2 = (14S,15R)-epoxy-(5Z,8Z,11Z)-eicosatrienoate + oxidized [NADPH--hemoprotein reductase] + H2O + H(+). The enzyme catalyses (5Z,8Z,11Z,14Z,17Z)-eicosapentaenoate + reduced [NADPH--hemoprotein reductase] + O2 = 11,12-epoxy-(5Z,8Z,14Z,17Z)-eicosatetraenoate + oxidized [NADPH--hemoprotein reductase] + H2O + H(+). It catalyses the reaction (5Z,8Z,11Z,14Z,17Z)-eicosapentaenoate + reduced [NADPH--hemoprotein reductase] + O2 = 14,15-epoxy-(5Z,8Z,11Z,17Z)-eicosatetraenoate + oxidized [NADPH--hemoprotein reductase] + H2O + H(+). It carries out the reaction (5Z,8Z,11Z,14Z,17Z)-eicosapentaenoate + reduced [NADPH--hemoprotein reductase] + O2 = (17R,18S)-epoxy-(5Z,8Z,11Z,14Z)-eicosatetraenoate + oxidized [NADPH--hemoprotein reductase] + H2O + H(+). The catalysed reaction is (5Z,8Z,11Z,14Z,17Z)-eicosapentaenoate + reduced [NADPH--hemoprotein reductase] + O2 = (17S,18R)-epoxy-(5Z,8Z,11Z,14Z)-eicosatetraenoate + oxidized [NADPH--hemoprotein reductase] + H2O + H(+). The enzyme catalyses (4Z,7Z,10Z,13Z,16Z,19Z)-docosahexaenoate + reduced [NADPH--hemoprotein reductase] + O2 = (19R,20S)-epoxy-(4Z,7Z,10Z,13Z,16Z)-docosapentaenoate + oxidized [NADPH--hemoprotein reductase] + H2O + H(+). It catalyses the reaction (4Z,7Z,10Z,13Z,16Z,19Z)-docosahexaenoate + reduced [NADPH--hemoprotein reductase] + O2 = (19S,20R)-epoxy-(4Z,7Z,10Z,13Z,16Z)-docosapentaenoate + oxidized [NADPH--hemoprotein reductase] + H2O + H(+). It carries out the reaction all-trans-retinoate + reduced [NADPH--hemoprotein reductase] + O2 = all-trans-4-hydroxyretinoate + oxidized [NADPH--hemoprotein reductase] + H2O + H(+). The catalysed reaction is 17beta-estradiol + reduced [NADPH--hemoprotein reductase] + O2 = 16alpha,17beta-estriol + oxidized [NADPH--hemoprotein reductase] + H2O + H(+). The enzyme catalyses estrone + reduced [NADPH--hemoprotein reductase] + O2 = 16alpha-hydroxyestrone + oxidized [NADPH--hemoprotein reductase] + H2O + H(+). It functions in the pathway steroid metabolism. It participates in lipid metabolism; arachidonate metabolism. The protein operates within cofactor metabolism; retinol metabolism. In terms of biological role, a cytochrome P450 monooxygenase involved in the metabolism of various endogenous substrates, including fatty acids, steroid hormones and vitamins. Mechanistically, uses molecular oxygen inserting one oxygen atom into a substrate, and reducing the second into a water molecule, with two electrons provided by NADPH via cytochrome P450 reductase (NADPH--hemoprotein reductase). Primarily catalyzes the epoxidation of double bonds of polyunsaturated fatty acids (PUFA) with a preference for the last double bond. Catalyzes the hydroxylation of carbon-hydrogen bonds. Metabolizes all trans-retinoic acid toward its 4-hydroxylated form. Displays 16-alpha hydroxylase activity toward estrogen steroid hormones, 17beta-estradiol (E2) and estrone (E1). Plays a role in the oxidative metabolism of xenobiotics. It is the principal enzyme responsible for the metabolism of the anti-cancer drug paclitaxel (taxol). The protein is Cytochrome P450 2C8 of Homo sapiens (Human).